The chain runs to 158 residues: NAD(P)H-quinone oxidoreductase subunit J, chloroplastic (158 aa).

This sequence belongs to the complex I 30 kDa subunit family. NDH is composed of at least 16 different subunits, 5 of which are encoded in the nucleus.

Its subcellular location is the plastid. The protein resides in the chloroplast thylakoid membrane. It catalyses the reaction a plastoquinone + NADH + (n+1) H(+)(in) = a plastoquinol + NAD(+) + n H(+)(out). The enzyme catalyses a plastoquinone + NADPH + (n+1) H(+)(in) = a plastoquinol + NADP(+) + n H(+)(out). Functionally, NDH shuttles electrons from NAD(P)H:plastoquinone, via FMN and iron-sulfur (Fe-S) centers, to quinones in the photosynthetic chain and possibly in a chloroplast respiratory chain. The immediate electron acceptor for the enzyme in this species is believed to be plastoquinone. Couples the redox reaction to proton translocation, and thus conserves the redox energy in a proton gradient. The protein is NAD(P)H-quinone oxidoreductase subunit J, chloroplastic of Drimys granadensis.